The following is a 252-amino-acid chain: Hydroxyacylglutathione hydrolase (252 aa).

Residues His-54, His-56, Asp-58, His-59, His-111, Asp-130, and His-170 each contribute to the Zn(2+) site.

The protein belongs to the metallo-beta-lactamase superfamily. Glyoxalase II family. Monomer. The cofactor is Zn(2+).

It carries out the reaction an S-(2-hydroxyacyl)glutathione + H2O = a 2-hydroxy carboxylate + glutathione + H(+). It participates in secondary metabolite metabolism; methylglyoxal degradation; (R)-lactate from methylglyoxal: step 2/2. Thiolesterase that catalyzes the hydrolysis of S-D-lactoyl-glutathione to form glutathione and D-lactic acid. This is Hydroxyacylglutathione hydrolase from Francisella tularensis subsp. holarctica (strain FTNF002-00 / FTA).